Reading from the N-terminus, the 306-residue chain is Ribonucleoside-diphosphate reductase small subunit (306 aa).

D66, E96, and H99 together coordinate Fe cation. Residue Y103 is part of the active site. A helical membrane pass occupies residues 153–173 (ILMILIEGIFFVSSFAAIAYL). Fe cation is bound by residues E159, E193, and H196.

Belongs to the ribonucleoside diphosphate reductase small chain family. In terms of assembly, heterotetramer composed of a homodimer of the large subunit (R1) and a homodimer of the small subunit (R2). Larger multisubunit protein complex are also active, composed of (R1)n(R2)n. Requires Fe cation as cofactor.

It localises to the host membrane. It carries out the reaction a 2'-deoxyribonucleoside 5'-diphosphate + [thioredoxin]-disulfide + H2O = a ribonucleoside 5'-diphosphate + [thioredoxin]-dithiol. Its function is as follows. Ribonucleoside-diphosphate reductase holoenzyme provides the precursors necessary for viral DNA synthesis. Allows virus growth in non-dividing cells, as well as reactivation from latency in infected hosts. Catalyzes the biosynthesis of deoxyribonucleotides from the corresponding ribonucleotides. The protein is Ribonucleoside-diphosphate reductase small subunit of Varicella-zoster virus (strain Dumas) (HHV-3).